The following is a 197-amino-acid chain: Adenylyl-sulfate kinase (197 aa).

33–40 contacts ATP; it reads GLSGSGKS. S107 functions as the Phosphoserine intermediate in the catalytic mechanism.

The protein belongs to the APS kinase family.

It catalyses the reaction adenosine 5'-phosphosulfate + ATP = 3'-phosphoadenylyl sulfate + ADP + H(+). The protein operates within sulfur metabolism; hydrogen sulfide biosynthesis; sulfite from sulfate: step 2/3. Its function is as follows. Catalyzes the synthesis of activated sulfate. This chain is Adenylyl-sulfate kinase, found in Bacillus pumilus (strain SAFR-032).